The primary structure comprises 1541 residues: MDKFCNSTFWDLSLLESPEADLPLCFEQTVLVWIPLGFLWLLAPWQLYSVYRSRTKRSSITKFYLAKQVFVVFLLILAAIDLSLALTEDTGQATVPPVRYTNPILYLCTWLLVLAVQHSRQWCVRKNSWFLSLFWILSVLCGVFQFQTLIRALLKDSKSNMAYSYLFFVSYGFQIVLLILTAFSGPSDSTQTPSVTASFLSSITFSWYDRTVLKGYKHPLTLEDVWDIDEGFKTRSVTSKFEAAMTKDLQKARQAFQRRLQKSQRKPEATLHGLNKKQSQSQDVLVLEEAKKKSEKTTKDYPKSWLIKSLFKTFHVVILKSFILKLIHDLLVFLNPQLLKLLIGFVKSSNSYVWFGYICAILMFAVTLIQSFCLQSYFQHCFVLGMCVRTTVMSSIYKKALTLSNLARKQYTIGETVNLMSVDSQKLMDATNYMQLVWSSVIQITLSIFFLWRELGPSILAGVGVMVLLIPVNGVLATKIRNIQVQNMKNKDKRLKIMNEILSGIKILKYFAWEPSFQEQVQGIRKKELKNLLRFGQLQSLLIFILQITPILVSVVTFSVYVLVDSANVLNAEKAFTSITLFNILRFPLSMLPMVTSSILQASVSVDRLERYLGGDDLDTSAIRRVSNFDKAVKFSEASFTWDPDLEATIQDVNLDIKPGQLVAVVGTVGSGKSSLVSAMLGEMENVHGHITIQGSTAYVPQQSWIQNGTIKDNILFGSEYNEKKYQQVLKACALLPDLEILPGGDMAEIGEKGINLSGGQKQRVSLARAAYQDADIYILDDPLSAVDAHVGKHIFNKVVGPNGLLAGKTRIFVTHGIHFLPQVDEIVVLGKGTILEKGSYRDLLDKKGVFARNWKTFMKHSGPEGEATVNNDSEAEDDDDGLIPTMEEIPEDAASLAMRRENSLRRTLSRSSRSSSRRGKSLKNSLKIKNVNVLKEKEKEVEGQKLIKKEFVETGKVKFSIYLKYLQAVGWWSILFIILFYGLNNVAFIGSNLWLSAWTSDSDNLNGTNNSSSHRDMRIGVFGALGLAQGICLLISTLWSIYACRNASKALHGQLLTNILRAPMRFFDTTPTGRIVNRFSGDISTVDDLLPQTLRSWMMCFFGIAGTLVMICMATPVFAIIIIPLSILYISVQVFYVATSRQLRRLDSVTKSPIYSHFSETVTGLPIIRAFEHQQRFLAWNEKQIDINQKCVFSWITSNRWLAIRLELVGNLVVFCSALLLVIYRKTLTGDVVGFVLSNALNITQTLNWLVRMTSEAETNIVAVERISEYINVENEAPWVTDKRPPADWPRHGEIQFNNYQVRYRPELDLVLKGITCNIKSGEKVGVVGRTGAGKSSLTNCLFRILESAGGQIIIDGIDVASIGLHDLRERLTIIPQDPILFSGSLRMNLDPFNKYSDEEVWRALELAHLRSFVSGLQLGLLSEVTEGGDNLSIGQRQLLCLGRAVLRKSKILVLDEATAAVDLETDSLIQTTIRKEFSQCTVITIAHRLHTIMDSDKIMVLDNGKIVEYGSPEELLSNRGSFYLMAKEAGIENVNHTEL.

Residues 1-26 (MDKFCNSTFWDLSLLESPEADLPLCF) lie on the Extracellular side of the membrane. N-linked (GlcNAc...) asparagine glycosylation is present at N6. The chain crosses the membrane as a helical span at residues 27–47 (EQTVLVWIPLGFLWLLAPWQL). The Cytoplasmic portion of the chain corresponds to 48-67 (YSVYRSRTKRSSITKFYLAK). A helical transmembrane segment spans residues 68 to 88 (QVFVVFLLILAAIDLSLALTE). The Extracellular portion of the chain corresponds to 89 to 92 (DTGQ). A helical transmembrane segment spans residues 93 to 113 (ATVPPVRYTNPILYLCTWLLV). Over 114-125 (LAVQHSRQWCVR) the chain is Cytoplasmic. A helical transmembrane segment spans residues 126 to 146 (KNSWFLSLFWILSVLCGVFQF). The Extracellular portion of the chain corresponds to 147–164 (QTLIRALLKDSKSNMAYS). The chain crosses the membrane as a helical span at residues 165-185 (YLFFVSYGFQIVLLILTAFSG). Residues 186–309 (PSDSTQTPSV…DYPKSWLIKS (124 aa)) lie on the Cytoplasmic side of the membrane. Phosphoserine is present on residues S279 and S281. The chain crosses the membrane as a helical span at residues 310–330 (LFKTFHVVILKSFILKLIHDL). One can recognise an ABC transmembrane type-1 1 domain in the interval 318 to 601 (ILKSFILKLI…LPMVTSSILQ (284 aa)). Topologically, residues 331 to 356 (LVFLNPQLLKLLIGFVKSSNSYVWFG) are extracellular. Residues 357-377 (YICAILMFAVTLIQSFCLQSY) form a helical membrane-spanning segment. Over 378-433 (FQHCFVLGMCVRTTVMSSIYKKALTLSNLARKQYTIGETVNLMSVDSQKLMDATNY) the chain is Cytoplasmic. Residues 434–454 (MQLVWSSVIQITLSIFFLWRE) traverse the membrane as a helical segment. Residues 455–457 (LGP) are Extracellular-facing. The helical transmembrane segment at 458–478 (SILAGVGVMVLLIPVNGVLAT) threads the bilayer. The Cytoplasmic portion of the chain corresponds to 479-540 (KIRNIQVQNM…NLLRFGQLQS (62 aa)). A helical membrane pass occupies residues 541–561 (LLIFILQITPILVSVVTFSVY). The Extracellular segment spans residues 562–583 (VLVDSANVLNAEKAFTSITLFN). The chain crosses the membrane as a helical span at residues 584–604 (ILRFPLSMLPMVTSSILQASV). The Cytoplasmic portion of the chain corresponds to 605 to 967 (SVDRLERYLG…VKFSIYLKYL (363 aa)). The ABC transporter 1 domain occupies 633-857 (VKFSEASFTW…KGVFARNWKT (225 aa)). 667-674 (GTVGSGKS) is an ATP binding site. 2 disordered regions span residues 862–881 (SGPE…DDDD) and 901–923 (RENS…GKSL). S874 is subject to Phosphoserine. Residues 906-915 (RRTLSRSSRS) are compositionally biased toward low complexity. S922 and S926 each carry phosphoserine. A helical membrane pass occupies residues 968–988 (QAVGWWSILFIILFYGLNNVA). Positions 975-1260 (ILFIILFYGL…LVRMTSEAET (286 aa)) constitute an ABC transmembrane type-1 2 domain. Topologically, residues 989 to 1029 (FIGSNLWLSAWTSDSDNLNGTNNSSSHRDMRIGVFGALGLA) are extracellular. Residues N1007, N1010, and N1011 are each glycosylated (N-linked (GlcNAc...) asparagine). The helical transmembrane segment at 1030–1050 (QGICLLISTLWSIYACRNASK) threads the bilayer. Over 1051–1093 (ALHGQLLTNILRAPMRFFDTTPTGRIVNRFSGDISTVDDLLPQ) the chain is Cytoplasmic. Residues 1094–1114 (TLRSWMMCFFGIAGTLVMICM) form a helical membrane-spanning segment. A1115 is a topological domain (extracellular). The chain crosses the membrane as a helical span at residues 1116–1136 (TPVFAIIIIPLSILYISVQVF). The Cytoplasmic portion of the chain corresponds to 1137–1207 (YVATSRQLRR…TSNRWLAIRL (71 aa)). The helical transmembrane segment at 1208-1228 (ELVGNLVVFCSALLLVIYRKT) threads the bilayer. Residues 1229–1230 (LT) lie on the Extracellular side of the membrane. The chain crosses the membrane as a helical span at residues 1231 to 1251 (GDVVGFVLSNALNITQTLNWL). Residues 1252–1541 (VRMTSEAETN…GIENVNHTEL (290 aa)) lie on the Cytoplasmic side of the membrane. The ABC transporter 2 domain occupies 1296–1530 (IQFNNYQVRY…RGSFYLMAKE (235 aa)). Residue 1330–1337 (GRTGAGKS) coordinates ATP. S1434 carries the post-translational modification Phosphoserine.

The protein belongs to the ABC transporter superfamily. ABCC family. Conjugate transporter (TC 3.A.1.208) subfamily. In terms of tissue distribution, mainly expressed in the liver.

The protein localises to the apical cell membrane. It catalyses the reaction an S-substituted glutathione(in) + ATP + H2O = an S-substituted glutathione(out) + ADP + phosphate + H(+). The enzyme catalyses taurolithocholate 3-sulfate(in) + ATP + H2O = taurolithocholate 3-sulfate(out) + ADP + phosphate + H(+). It carries out the reaction ATP + H2O + xenobioticSide 1 = ADP + phosphate + xenobioticSide 2.. The catalysed reaction is 17beta-estradiol 17-O-(beta-D-glucuronate)(in) + ATP + H2O = 17beta-estradiol 17-O-(beta-D-glucuronate)(out) + ADP + phosphate + H(+). It catalyses the reaction leukotriene C4(in) + ATP + H2O = leukotriene C4(out) + ADP + phosphate + H(+). The enzyme catalyses (4Z,15Z)-bilirubin IXalpha C8-beta-D-glucuronoside(in) + ATP + H2O = (4Z,15Z)-bilirubin IXalpha C8-beta-D-glucuronoside(out) + ADP + phosphate + H(+). It carries out the reaction (4Z,15Z)-bilirubin IXalpha C8,C12-beta-D-bisglucuronoside(in) + ATP + H2O = (4Z,15Z)-bilirubin IXalpha C8,C12-beta-D-bisglucuronoside(out) + ADP + phosphate + H(+). ATP-dependent transporter of the ATP-binding cassette (ABC) family that binds and hydrolyzes ATP to enable active transport of various substrates including many drugs, toxicants and endogenous compound across cell membranes. Transports a wide variety of conjugated organic anions such as sulfate-, glucuronide- and glutathione (GSH)-conjugates of endo- and xenobiotics substrates. Mediates hepatobiliary excretion of mono- and bis-glucuronidated bilirubin molecules and therefore play an important role in bilirubin detoxification. Also mediates hepatobiliary excretion of others glucuronide conjugates such as 17beta-estradiol 17-glucosiduronic acid and leukotriene C4. Transports sulfated bile salt such as taurolithocholate sulfate. Transports various anticancer drugs, such as anthracycline, vinca alkaloid and methotrexate and HIV-drugs such as protease inhibitors. The chain is ATP-binding cassette sub-family C member 2 from Rattus norvegicus (Rat).